The sequence spans 251 residues: Flagellar basal-body rod protein FlgF (251 aa).

Belongs to the flagella basal body rod proteins family. The basal body constitutes a major portion of the flagellar organelle and consists of five rings (E,L,P,S, and M) mounted on a central rod. The rod consists of about 26 subunits of FlgG in the distal portion, and FlgB, FlgC and FlgF are thought to build up the proximal portion of the rod with about 6 subunits each.

It is found in the bacterial flagellum basal body. The protein is Flagellar basal-body rod protein FlgF (flgF) of Escherichia coli (strain K12).